A 227-amino-acid polypeptide reads, in one-letter code: Phosphoribosylformylglycinamidine synthase subunit PurQ (227 aa).

The Glutamine amidotransferase type-1 domain occupies 3–225 (FAVIVFPGSN…VKQGAHHVKT (223 aa)). Cys-86 functions as the Nucleophile in the catalytic mechanism. Residues His-194 and Glu-196 contribute to the active site.

In terms of assembly, part of the FGAM synthase complex composed of 1 PurL, 1 PurQ and 2 PurS subunits.

It localises to the cytoplasm. It catalyses the reaction N(2)-formyl-N(1)-(5-phospho-beta-D-ribosyl)glycinamide + L-glutamine + ATP + H2O = 2-formamido-N(1)-(5-O-phospho-beta-D-ribosyl)acetamidine + L-glutamate + ADP + phosphate + H(+). It carries out the reaction L-glutamine + H2O = L-glutamate + NH4(+). It functions in the pathway purine metabolism; IMP biosynthesis via de novo pathway; 5-amino-1-(5-phospho-D-ribosyl)imidazole from N(2)-formyl-N(1)-(5-phospho-D-ribosyl)glycinamide: step 1/2. Its function is as follows. Part of the phosphoribosylformylglycinamidine synthase complex involved in the purines biosynthetic pathway. Catalyzes the ATP-dependent conversion of formylglycinamide ribonucleotide (FGAR) and glutamine to yield formylglycinamidine ribonucleotide (FGAM) and glutamate. The FGAM synthase complex is composed of three subunits. PurQ produces an ammonia molecule by converting glutamine to glutamate. PurL transfers the ammonia molecule to FGAR to form FGAM in an ATP-dependent manner. PurS interacts with PurQ and PurL and is thought to assist in the transfer of the ammonia molecule from PurQ to PurL. This Exiguobacterium sibiricum (strain DSM 17290 / CCUG 55495 / CIP 109462 / JCM 13490 / 255-15) protein is Phosphoribosylformylglycinamidine synthase subunit PurQ.